The primary structure comprises 376 residues: D-alanine--D-alanine ligase (376 aa).

In terms of domain architecture, ATP-grasp spans 150–358 (KIIFEKEGLP…YSELINKLIE (209 aa)). 183 to 238 (EGRLTYPCFVKPSNAGSSVGVNKASDRESLVKALNIAAKNDRRILVEEFINGREIE) is a binding site for ATP. D311, E325, and N327 together coordinate Mg(2+).

Belongs to the D-alanine--D-alanine ligase family. Requires Mg(2+) as cofactor. The cofactor is Mn(2+).

The protein resides in the cytoplasm. It carries out the reaction 2 D-alanine + ATP = D-alanyl-D-alanine + ADP + phosphate + H(+). It functions in the pathway cell wall biogenesis; peptidoglycan biosynthesis. Its function is as follows. Cell wall formation. The sequence is that of D-alanine--D-alanine ligase from Ruminiclostridium cellulolyticum (strain ATCC 35319 / DSM 5812 / JCM 6584 / H10) (Clostridium cellulolyticum).